The following is a 224-amino-acid chain: Viral late gene transcription factor 3 (224 aa).

A zinc finger lies at 6-26; the sequence is CSGCRHNGIVSEQGYEYCIFC.

The protein belongs to the orthopoxvirus VLTF-3/OPG127 family. Interacts with the late transcription elongation factor VLTF-4/OPG110. Interacts with the late transcription factors VLTF-1/OPG093.

Acts with RNA polymerase to initiate transcription from late gene promoters. This Vaccinia virus (strain Ankara) (VACV) protein is Viral late gene transcription factor 3 (OPG127).